A 238-amino-acid polypeptide reads, in one-letter code: Probable septum site-determining protein MinC (238 aa).

Belongs to the MinC family. As to quaternary structure, interacts with MinD and FtsZ.

Cell division inhibitor that blocks the formation of polar Z ring septums. Rapidly oscillates between the poles of the cell to destabilize FtsZ filaments that have formed before they mature into polar Z rings. Prevents FtsZ polymerization. This Xylella fastidiosa (strain M12) protein is Probable septum site-determining protein MinC.